A 424-amino-acid polypeptide reads, in one-letter code: PtdIns3K complex I subunit atg38 (424 aa).

The stretch at Leu-50 to Thr-78 forms a coiled coil. Residues Leu-73–Gln-212 are required for interaction with atg8. The AIM signature appears at Phe-178 to Val-181. Residues Leu-268–Lys-284 are compositionally biased toward basic and acidic residues. The interval Leu-268–Glu-299 is disordered. A coiled-coil region spans residues Thr-390–Asp-420.

It belongs to the ATG38 family. Component of the autophagy-specific vps34 PI3-kinase complex I composed of vps15, atg6, pik3/vps34, atg14 and atg38. Interacts (via AIM motif) with atg8; the interaction is direct and leads to recruitment of the autophagy-specific vps34 PI3-kinase complex I to the phagophore assembly site.

The protein resides in the preautophagosomal structure membrane. It is found in the cytoplasm. Its subcellular location is the cytosol. In terms of biological role, functions as a part of the autophagy-specific VPS34 PI3-kinase complex I that plays a role in autophagosome assembly. This complex is essential to recruit the atg8-phosphatidylinositol conjugate and the atg12-atg5 conjugate to the pre-autophagosomal structure. By binding to atg8 at the phagophore assembly site, atg38 helps establish a positive feedback loop for recruitment of phagophore assembly proteins, including atg8. The sequence is that of PtdIns3K complex I subunit atg38 from Schizosaccharomyces pombe (strain 972 / ATCC 24843) (Fission yeast).